A 199-amino-acid polypeptide reads, in one-letter code: NAD(P)H dehydrogenase (quinone) (199 aa).

In terms of domain architecture, Flavodoxin-like spans 4–190 (MLVLYYSAYG…DGARFQGRRV (187 aa)). FMN-binding positions include 10-15 (SAYGYM) and 78-80 (TRY). Tyrosine 12 provides a ligand contact to NAD(+). Tryptophan 98 is a binding site for substrate. FMN-binding positions include 113–119 (STATQHG) and histidine 134. Positions 158-181 (GAPYGMTTTADGDGSRQPSAQELD) are disordered. Residues 163–177 (MTTTADGDGSRQPSA) are compositionally biased toward polar residues.

This sequence belongs to the WrbA family. FMN is required as a cofactor.

It carries out the reaction a quinone + NADH + H(+) = a quinol + NAD(+). It catalyses the reaction a quinone + NADPH + H(+) = a quinol + NADP(+). The chain is NAD(P)H dehydrogenase (quinone) from Brucella abortus (strain S19).